Consider the following 130-residue polypeptide: Follitropin subunit beta (130 aa).

Residues 1–20 (MMKLIQLCILFWCWRAICCH) form the signal peptide. Disulfide bonds link C22–C70, C36–C85, C39–C123, C47–C101, C51–C103, and C106–C113. N-linked (GlcNAc...) asparagine glycans are attached at residues N26 and N43.

This sequence belongs to the glycoprotein hormones subunit beta family. As to quaternary structure, heterodimer. The active follitropin is a heterodimer composed of an alpha chain/CGA shared with other hormones and a unique beta chain/FSHB shown here.

Its subcellular location is the secreted. Functionally, together with the alpha chain CGA constitutes follitropin, the follicle-stimulating hormone, and provides its biological specificity to the hormone heterodimer. Binds FSHR, a G protein-coupled receptor, on target cells to activate downstream signaling pathways. Follitropin is involved in follicle development and spermatogenesis in reproductive organs. This Mus musculus (Mouse) protein is Follitropin subunit beta (Fshb).